The following is a 458-amino-acid chain: UPF0210 protein MJ1665 (458 aa).

The protein belongs to the UPF0210 family.

This Methanocaldococcus jannaschii (strain ATCC 43067 / DSM 2661 / JAL-1 / JCM 10045 / NBRC 100440) (Methanococcus jannaschii) protein is UPF0210 protein MJ1665.